Reading from the N-terminus, the 312-residue chain is Glyoxylate/hydroxypyruvate reductase A (312 aa).

Arg227 is a catalytic residue. The active-site Proton donor is the His275.

The protein belongs to the D-isomer specific 2-hydroxyacid dehydrogenase family. GhrA subfamily.

It is found in the cytoplasm. It catalyses the reaction glycolate + NADP(+) = glyoxylate + NADPH + H(+). It carries out the reaction (R)-glycerate + NAD(+) = 3-hydroxypyruvate + NADH + H(+). The catalysed reaction is (R)-glycerate + NADP(+) = 3-hydroxypyruvate + NADPH + H(+). Its function is as follows. Catalyzes the NADPH-dependent reduction of glyoxylate and hydroxypyruvate into glycolate and glycerate, respectively. This is Glyoxylate/hydroxypyruvate reductase A from Salmonella enteritidis PT4 (strain P125109).